The following is a 55-amino-acid chain: MAVPKRRMSRANTHSRRSQWKADNVALQHVKVQGQDVQIPRRLVKAAQLGLIDLD.

A compositionally biased stretch (basic residues) spans 1-19 (MAVPKRRMSRANTHSRRSQ). Residues 1-20 (MAVPKRRMSRANTHSRRSQW) form a disordered region.

This sequence belongs to the bacterial ribosomal protein bL32 family.

In Corynebacterium jeikeium (strain K411), this protein is Large ribosomal subunit protein bL32.